The primary structure comprises 102 residues: Small ribosomal subunit protein uS10 (102 aa).

The protein belongs to the universal ribosomal protein uS10 family. In terms of assembly, part of the 30S ribosomal subunit.

Functionally, involved in the binding of tRNA to the ribosomes. The sequence is that of Small ribosomal subunit protein uS10 from Methanothrix thermoacetophila (strain DSM 6194 / JCM 14653 / NBRC 101360 / PT) (Methanosaeta thermophila).